Consider the following 199-residue polypeptide: uncharacterized protein (199 aa).

This is an uncharacterized protein from Connochaetes taurinus (Blue wildebeest).